A 310-amino-acid polypeptide reads, in one-letter code: MLRSHCMEFSEELKTLKDQVRFDGSFRTGTFSNIVIAGMGGSGIAGRIFSEMYSAKPVFVCDDYHIPEFVDGNTEFIAVSYSGNTEETLSAAEEAIKKGAKVHAITSGGRLSEMGVDTIKIPGGLQPRSAVGYLTMPIINTFIRPKHEDIEEAAGLLSDLDKNNTVQENIATEIYAGRRIPVIYGSTPYRSVAYRWKTQFNENAKILAYSNYFSELNHNDTMPLRDTYRKDEFYFMAFDSTDERIRKRIEVTQKITGTSFKKIEARGSSLIARIFYLIHFGDYVTYHLARIRNVDPQDVSAIEDLKKRIS.

Positions 22–152 (FDGSFRTGTF…IRPKHEDIEE (131 aa)) constitute an SIS domain. The D-fructose 6-phosphate site is built by Gly41, Ser42, Ser80, Ser82, Thr85, and Arg128. Glu202 functions as the Proton acceptor in the catalytic mechanism. 2 residues coordinate D-fructose 6-phosphate: His218 and Lys306. Catalysis depends on His218, which acts as the Proton donor. Catalysis depends on Lys306, which acts as the Proton acceptor.

The protein belongs to the PGI/PMI family. In terms of assembly, homodimer.

It catalyses the reaction alpha-D-glucose 6-phosphate = beta-D-fructose 6-phosphate. The catalysed reaction is D-mannose 6-phosphate = D-fructose 6-phosphate. With respect to regulation, inhibited by low concentrations of erythrose 4-phosphate and 6-phosphogluconate. Dual specificity isomerase that catalyzes the isomerization of both glucose-6-phosphate and mannose-6-phosphate to fructose-6-phosphate with similar catalytic efficiency. The polypeptide is Bifunctional phosphoglucose/phosphomannose isomerase (Thermoplasma acidophilum (strain ATCC 25905 / DSM 1728 / JCM 9062 / NBRC 15155 / AMRC-C165)).